Consider the following 223-residue polypeptide: Probable 3-beta-hydroxysteroid-Delta(8),Delta(7)-isomerase (223 aa).

The next 4 membrane-spanning stretches (helical) occupy residues 28–48 (IVSIYLGSSLLVVSLVWLLFG), 58–78 (LMCWWTFTGLTHVILEGYFVF), 115–135 (VEGITAVIVGPASLLAIYAIA), and 175–195 (FYYYSYYIGANCWWVLIPSLI). An EXPERA domain is found at 54–196 (LDKLLMCWWT…WWVLIPSLIS (143 aa)).

Belongs to the EBP family.

It localises to the endoplasmic reticulum membrane. The catalysed reaction is lathosterol = 5alpha-cholest-8-en-3beta-ol. Its pathway is steroid biosynthesis; sterol biosynthesis. In terms of biological role, catalyzes the conversion of Delta(8)-sterols to their corresponding Delta(7)-isomers. The chain is Probable 3-beta-hydroxysteroid-Delta(8),Delta(7)-isomerase from Arabidopsis thaliana (Mouse-ear cress).